Here is a 494-residue protein sequence, read N- to C-terminus: Ketol-acid reductoisomerase (NADP(+)) (494 aa).

The region spanning 14–208 is the KARI N-terminal Rossmann domain; sequence LDQLGRCRFM…GGHRAGCLES (195 aa). Residues 45 to 48, R68, R76, S78, and 108 to 110 contribute to the NADP(+) site; these read CGAQ and DKQ. H132 is a catalytic residue. G158 serves as a coordination point for NADP(+). 2 KARI C-terminal knotted domains span residues 209-344 and 345-487; these read SFVA…NYPE and TDVE…MTDM. Residues D217, E221, E389, and E393 each coordinate Mg(2+). S414 contributes to the substrate binding site.

Belongs to the ketol-acid reductoisomerase family. Mg(2+) is required as a cofactor.

The catalysed reaction is (2R)-2,3-dihydroxy-3-methylbutanoate + NADP(+) = (2S)-2-acetolactate + NADPH + H(+). It carries out the reaction (2R,3R)-2,3-dihydroxy-3-methylpentanoate + NADP(+) = (S)-2-ethyl-2-hydroxy-3-oxobutanoate + NADPH + H(+). It functions in the pathway amino-acid biosynthesis; L-isoleucine biosynthesis; L-isoleucine from 2-oxobutanoate: step 2/4. Its pathway is amino-acid biosynthesis; L-valine biosynthesis; L-valine from pyruvate: step 2/4. In terms of biological role, involved in the biosynthesis of branched-chain amino acids (BCAA). Catalyzes an alkyl-migration followed by a ketol-acid reduction of (S)-2-acetolactate (S2AL) to yield (R)-2,3-dihydroxy-isovalerate. In the isomerase reaction, S2AL is rearranged via a Mg-dependent methyl migration to produce 3-hydroxy-3-methyl-2-ketobutyrate (HMKB). In the reductase reaction, this 2-ketoacid undergoes a metal-dependent reduction by NADPH to yield (R)-2,3-dihydroxy-isovalerate. This chain is Ketol-acid reductoisomerase (NADP(+)), found in Vibrio parahaemolyticus serotype O3:K6 (strain RIMD 2210633).